The chain runs to 308 residues: Ribosomal RNA small subunit methyltransferase H (308 aa).

S-adenosyl-L-methionine contacts are provided by residues Gly36–His38, Asp55, Phe86, Asp103, and Gln110.

The protein belongs to the methyltransferase superfamily. RsmH family.

Its subcellular location is the cytoplasm. It carries out the reaction cytidine(1402) in 16S rRNA + S-adenosyl-L-methionine = N(4)-methylcytidine(1402) in 16S rRNA + S-adenosyl-L-homocysteine + H(+). Functionally, specifically methylates the N4 position of cytidine in position 1402 (C1402) of 16S rRNA. This is Ribosomal RNA small subunit methyltransferase H from Helicobacter pylori (strain P12).